A 564-amino-acid polypeptide reads, in one-letter code: Phenylalanine--tRNA ligase beta subunit (564 aa).

The B5 domain occupies 286-362 (YFQNMLEVNV…IGMGLDSFKP (77 aa)). Asp340, Asp346, Glu349, and Glu350 together coordinate Mg(2+).

Belongs to the phenylalanyl-tRNA synthetase beta subunit family. Type 2 subfamily. As to quaternary structure, tetramer of two alpha and two beta subunits. Mg(2+) serves as cofactor.

The protein localises to the cytoplasm. The enzyme catalyses tRNA(Phe) + L-phenylalanine + ATP = L-phenylalanyl-tRNA(Phe) + AMP + diphosphate + H(+). The sequence is that of Phenylalanine--tRNA ligase beta subunit from Borrelia turicatae (strain 91E135).